Reading from the N-terminus, the 413-residue chain is Tyrosine--tRNA ligase (413 aa).

A 'HIGH' region motif is present at residues 57-66 (PTAPDIHLGH). The short motif at 241-245 (KMSKS) is the 'KMSKS' region element. Lys-244 serves as a coordination point for ATP. The region spanning 351-412 (VWLPRLMVQA…GKRKFARLHT (62 aa)) is the S4 RNA-binding domain.

This sequence belongs to the class-I aminoacyl-tRNA synthetase family. TyrS type 2 subfamily. Homodimer.

It is found in the cytoplasm. The enzyme catalyses tRNA(Tyr) + L-tyrosine + ATP = L-tyrosyl-tRNA(Tyr) + AMP + diphosphate + H(+). Functionally, catalyzes the attachment of tyrosine to tRNA(Tyr) in a two-step reaction: tyrosine is first activated by ATP to form Tyr-AMP and then transferred to the acceptor end of tRNA(Tyr). This chain is Tyrosine--tRNA ligase, found in Moorella thermoacetica (strain ATCC 39073 / JCM 9320).